The chain runs to 247 residues: Adenosylcobinamide-GDP ribazoletransferase (247 aa).

A run of 6 helical transmembrane segments spans residues 34–54, 59–79, 113–133, 138–158, 171–193, and 194–214; these read IVTFPLIGMLLGAIGGLVFVA, CGIPLAALFCVLTLALLTGGF, GGLALIFVLLAKVLVISELAL, MLAALAMACAAGRGVAVLLMY, VFIGKVTGRQTCVTLGLTAILAA, and ILMPGMHGVAALVVTLAAIFI.

This sequence belongs to the CobS family. It depends on Mg(2+) as a cofactor.

The protein resides in the cell inner membrane. It catalyses the reaction alpha-ribazole + adenosylcob(III)inamide-GDP = adenosylcob(III)alamin + GMP + H(+). It carries out the reaction alpha-ribazole 5'-phosphate + adenosylcob(III)inamide-GDP = adenosylcob(III)alamin 5'-phosphate + GMP + H(+). It functions in the pathway cofactor biosynthesis; adenosylcobalamin biosynthesis; adenosylcobalamin from cob(II)yrinate a,c-diamide: step 7/7. Joins adenosylcobinamide-GDP and alpha-ribazole to generate adenosylcobalamin (Ado-cobalamin). Also synthesizes adenosylcobalamin 5'-phosphate from adenosylcobinamide-GDP and alpha-ribazole 5'-phosphate. This Citrobacter koseri (strain ATCC BAA-895 / CDC 4225-83 / SGSC4696) protein is Adenosylcobinamide-GDP ribazoletransferase.